A 428-amino-acid chain; its full sequence is Pyruvate dehydrogenase E1 component subunit alpha-3, chloroplastic (428 aa).

The N-terminal 61 residues, 1 to 61 (MATAFAPTKL…NATRRSPVVS (61 aa)), are a transit peptide targeting the chloroplast. The pyruvate site is built by histidine 115, tyrosine 141, arginine 142, alanine 190, isoleucine 192, aspartate 227, glycine 228, and asparagine 256. Residues tyrosine 141, arginine 142, alanine 190, isoleucine 192, aspartate 227, glycine 228, asparagine 256, and histidine 325 each contribute to the thiamine diphosphate site. Residue aspartate 227 participates in Mg(2+) binding. Asparagine 256 provides a ligand contact to Mg(2+).

As to quaternary structure, tetramer of 2 alpha and 2 beta subunits. Thiamine diphosphate serves as cofactor. It depends on Mg(2+) as a cofactor.

The protein resides in the plastid. It is found in the chloroplast. It carries out the reaction N(6)-[(R)-lipoyl]-L-lysyl-[protein] + pyruvate + H(+) = N(6)-[(R)-S(8)-acetyldihydrolipoyl]-L-lysyl-[protein] + CO2. In terms of biological role, the pyruvate dehydrogenase complex catalyzes the overall conversion of pyruvate to acetyl-CoA and CO(2). It contains multiple copies of three enzymatic components: pyruvate dehydrogenase (E1), dihydrolipoamide acetyltransferase (E2) and lipoamide dehydrogenase (E3). The protein is Pyruvate dehydrogenase E1 component subunit alpha-3, chloroplastic (PDH-E1 ALPHA) of Arabidopsis thaliana (Mouse-ear cress).